The sequence spans 160 residues: Ribosomal RNA large subunit methyltransferase H (160 aa).

2 residues coordinate S-adenosyl-L-methionine: leucine 76 and glycine 108.

Belongs to the RNA methyltransferase RlmH family. As to quaternary structure, homodimer.

The protein resides in the cytoplasm. It catalyses the reaction pseudouridine(1915) in 23S rRNA + S-adenosyl-L-methionine = N(3)-methylpseudouridine(1915) in 23S rRNA + S-adenosyl-L-homocysteine + H(+). Functionally, specifically methylates the pseudouridine at position 1915 (m3Psi1915) in 23S rRNA. This Xanthobacter autotrophicus (strain ATCC BAA-1158 / Py2) protein is Ribosomal RNA large subunit methyltransferase H.